Here is a 321-residue protein sequence, read N- to C-terminus: MARRPKGRFIDGIVLLDKSTGMSSNFALQRVKRFFNANKAGHTGALDPLATGMLPVCLGEGTKFSQHLLDADKRYLVTAKLGERTDTSDSDGEVVQTRAIDFTEAQLLTALDFFRGETQQVPSMYSALKYQGQPLYKYAREGIEVPRESRPITVFELNFIGLEGDELTLDIHCSKGTYIRTIIDDLGEMLGCGAHVIMLRRTQVAQYPYARMVTLEQLEALVAQAHEQQIDPSVLLDPLLLPMDTAVADFPEVNVPDAIAPYLMQGQAVRVPVNADLKTDELVRITLGDIRRFVGIGTMNEDGLLAPKRLIVIHDEPAETD.

Asp47 serves as the catalytic Nucleophile.

It belongs to the pseudouridine synthase TruB family. Type 1 subfamily.

It carries out the reaction uridine(55) in tRNA = pseudouridine(55) in tRNA. Responsible for synthesis of pseudouridine from uracil-55 in the psi GC loop of transfer RNAs. The chain is tRNA pseudouridine synthase B from Shewanella baltica (strain OS223).